A 279-amino-acid chain; its full sequence is Oxygen-dependent coproporphyrinogen-III oxidase (279 aa).

A substrate-binding site is contributed by Ser-102. 2 residues coordinate a divalent metal cation: His-106 and His-116. His-116 acts as the Proton donor in catalysis. Residue 118–120 (NTR) coordinates substrate. His-149 and His-179 together coordinate a divalent metal cation. An important for dimerization region spans residues 244 to 279 (YVEFNLLYDRGTKFGLMTDGNVEAILMSLPPEVKFN).

It belongs to the aerobic coproporphyrinogen-III oxidase family. Homodimer. The cofactor is a divalent metal cation.

Its subcellular location is the cytoplasm. It catalyses the reaction coproporphyrinogen III + O2 + 2 H(+) = protoporphyrinogen IX + 2 CO2 + 2 H2O. Its pathway is porphyrin-containing compound metabolism; protoporphyrin-IX biosynthesis; protoporphyrinogen-IX from coproporphyrinogen-III (O2 route): step 1/1. Its function is as follows. Involved in the heme biosynthesis. Catalyzes the aerobic oxidative decarboxylation of propionate groups of rings A and B of coproporphyrinogen-III to yield the vinyl groups in protoporphyrinogen-IX. The chain is Oxygen-dependent coproporphyrinogen-III oxidase from Rickettsia akari (strain Hartford).